The sequence spans 295 residues: tRNA-cytidine(32) 2-sulfurtransferase (295 aa).

The PP-loop motif signature appears at 59-64 (SGGKDS). Positions 134, 137, and 225 each coordinate [4Fe-4S] cluster.

Belongs to the TtcA family. Homodimer. Requires Mg(2+) as cofactor. [4Fe-4S] cluster is required as a cofactor.

The protein localises to the cytoplasm. It carries out the reaction cytidine(32) in tRNA + S-sulfanyl-L-cysteinyl-[cysteine desulfurase] + AH2 + ATP = 2-thiocytidine(32) in tRNA + L-cysteinyl-[cysteine desulfurase] + A + AMP + diphosphate + H(+). It functions in the pathway tRNA modification. Its function is as follows. Catalyzes the ATP-dependent 2-thiolation of cytidine in position 32 of tRNA, to form 2-thiocytidine (s(2)C32). The sulfur atoms are provided by the cysteine/cysteine desulfurase (IscS) system. This Ruegeria sp. (strain TM1040) (Silicibacter sp.) protein is tRNA-cytidine(32) 2-sulfurtransferase.